A 360-amino-acid chain; its full sequence is Phospho-N-acetylmuramoyl-pentapeptide-transferase (360 aa).

Helical transmembrane passes span 21-41 (YVTF…LWWG), 74-94 (MGGI…GDLG), 97-117 (YVWV…IDDY), 134-154 (YILQ…SADM), 168-188 (IMPQ…VGSS), 199-219 (GLAI…AYLS), 236-256 (AGEL…FLWF), 263-283 (VFMG…IAVL), 288-308 (ILLV…ILQV), and 338-358 (VIVR…ATLK).

The protein belongs to the glycosyltransferase 4 family. MraY subfamily. Mg(2+) is required as a cofactor.

Its subcellular location is the cell inner membrane. The enzyme catalyses UDP-N-acetyl-alpha-D-muramoyl-L-alanyl-gamma-D-glutamyl-meso-2,6-diaminopimeloyl-D-alanyl-D-alanine + di-trans,octa-cis-undecaprenyl phosphate = di-trans,octa-cis-undecaprenyl diphospho-N-acetyl-alpha-D-muramoyl-L-alanyl-D-glutamyl-meso-2,6-diaminopimeloyl-D-alanyl-D-alanine + UMP. The protein operates within cell wall biogenesis; peptidoglycan biosynthesis. Its function is as follows. Catalyzes the initial step of the lipid cycle reactions in the biosynthesis of the cell wall peptidoglycan: transfers peptidoglycan precursor phospho-MurNAc-pentapeptide from UDP-MurNAc-pentapeptide onto the lipid carrier undecaprenyl phosphate, yielding undecaprenyl-pyrophosphoryl-MurNAc-pentapeptide, known as lipid I. This is Phospho-N-acetylmuramoyl-pentapeptide-transferase from Shewanella woodyi (strain ATCC 51908 / MS32).